The sequence spans 492 residues: Glycerol kinase 1 (492 aa).

Thr10 contacts ADP. ATP-binding residues include Thr10 and Ser11. Sn-glycerol 3-phosphate is bound at residue Thr10. Position 14 (Lys14) interacts with ADP. Sn-glycerol 3-phosphate-binding residues include Arg80, Glu81, Tyr132, and Asp241. Positions 80, 81, 132, and 241 each coordinate glycerol. ADP is bound by residues Thr263, Gly306, Gly407, and Asn411. ATP is bound by residues Thr263, Gly306, and Gly407.

The protein belongs to the FGGY kinase family.

The catalysed reaction is glycerol + ATP = sn-glycerol 3-phosphate + ADP + H(+). It functions in the pathway polyol metabolism; glycerol degradation via glycerol kinase pathway; sn-glycerol 3-phosphate from glycerol: step 1/1. With respect to regulation, inhibited by fructose 1,6-bisphosphate (FBP). In terms of biological role, key enzyme in the regulation of glycerol uptake and metabolism. Catalyzes the phosphorylation of glycerol to yield sn-glycerol 3-phosphate. The chain is Glycerol kinase 1 from Thermotoga maritima (strain ATCC 43589 / DSM 3109 / JCM 10099 / NBRC 100826 / MSB8).